The chain runs to 33 residues: Cytochrome b6-f complex subunit 7 (33 aa).

A helical transmembrane segment spans residues 9–29 (AVICFTLTLIGLSLGFVLLKI).

Belongs to the PetM family. In terms of assembly, the 4 large subunits of the cytochrome b6-f complex are cytochrome b6, subunit IV (17 kDa polypeptide, PetD), cytochrome f and the Rieske protein, while the 4 small subunits are PetG, PetL, PetM and PetN. The complex functions as a dimer.

The protein localises to the plastid. It is found in the cyanelle thylakoid membrane. Component of the cytochrome b6-f complex, which mediates electron transfer between photosystem II (PSII) and photosystem I (PSI), cyclic electron flow around PSI, and state transitions. This Cyanophora paradoxa protein is Cytochrome b6-f complex subunit 7.